The following is a 501-amino-acid chain: L-arabinose isomerase (501 aa).

The Mn(2+) site is built by Glu306, Glu333, His350, and His449.

It belongs to the arabinose isomerase family. Mn(2+) serves as cofactor.

It carries out the reaction beta-L-arabinopyranose = L-ribulose. It functions in the pathway carbohydrate degradation; L-arabinose degradation via L-ribulose; D-xylulose 5-phosphate from L-arabinose (bacterial route): step 1/3. Catalyzes the conversion of L-arabinose to L-ribulose. The chain is L-arabinose isomerase from Mycolicibacterium smegmatis (strain ATCC 700084 / mc(2)155) (Mycobacterium smegmatis).